The sequence spans 483 residues: Glutamate--tRNA ligase (483 aa).

The short motif at 11–21 (PSPTGLLHIGN) is the 'HIGH' region element. Positions 255–259 (KLSKR) match the 'KMSKS' region motif. Position 258 (K258) interacts with ATP.

Belongs to the class-I aminoacyl-tRNA synthetase family. Glutamate--tRNA ligase type 1 subfamily. Monomer.

The protein resides in the cytoplasm. The enzyme catalyses tRNA(Glu) + L-glutamate + ATP = L-glutamyl-tRNA(Glu) + AMP + diphosphate. Its function is as follows. Catalyzes the attachment of glutamate to tRNA(Glu) in a two-step reaction: glutamate is first activated by ATP to form Glu-AMP and then transferred to the acceptor end of tRNA(Glu). The polypeptide is Glutamate--tRNA ligase (Lactococcus lactis subsp. cremoris (strain SK11)).